We begin with the raw amino-acid sequence, 336 residues long: Acetyl-coenzyme A carboxylase carboxyl transferase subunit alpha (336 aa).

Residues 48 to 308 (ALEAKVESLR…KSMLIEELQG (261 aa)) form the CoA carboxyltransferase C-terminal domain.

This sequence belongs to the AccA family. Acetyl-CoA carboxylase is a heterohexamer composed of biotin carboxyl carrier protein (AccB), biotin carboxylase (AccC) and two subunits each of ACCase subunit alpha (AccA) and ACCase subunit beta (AccD).

It localises to the cytoplasm. The catalysed reaction is N(6)-carboxybiotinyl-L-lysyl-[protein] + acetyl-CoA = N(6)-biotinyl-L-lysyl-[protein] + malonyl-CoA. Its pathway is lipid metabolism; malonyl-CoA biosynthesis; malonyl-CoA from acetyl-CoA: step 1/1. Component of the acetyl coenzyme A carboxylase (ACC) complex. First, biotin carboxylase catalyzes the carboxylation of biotin on its carrier protein (BCCP) and then the CO(2) group is transferred by the carboxyltransferase to acetyl-CoA to form malonyl-CoA. The polypeptide is Acetyl-coenzyme A carboxylase carboxyl transferase subunit alpha (Chlorobaculum parvum (strain DSM 263 / NCIMB 8327) (Chlorobium vibrioforme subsp. thiosulfatophilum)).